A 452-amino-acid chain; its full sequence is MESSGDKQTSSLYPTVDTSNPEAPINPSSSSSTNNLYPSLDMNDLARNLFPEQPETSSIPVSAPPAATEEVILKISGAILHLIDKSYSVELACGDLEIIRIVQGENVVAVLASVSDEIQWPLTKDENSVKVDESHYFFTLRPTKEISHDSSDEEDGDGGKNTNEMLNYGLTIASKGQEHLLVELEKILEDYSSFSVQEVSEEAKEAGEKVLDVTVARETSPVELTGERKEIVERQCSAYWTTLAPNVEDYSGKAAKLIATGSGHLIKGILWCGDVTMDRLIWGNGFMKRRLSKAEKESEVHPDTLKRIRRVKRMTKMTESVANSILSGVLKVSGFFTSSVANTKVGKKFFSLLPGEVILASLDGFNKVCDAVEVAGRNVMSTSSTVTTELVDHKYGGKAAEATNEGLDAAGYALGTAWVAFKIRKAINPKSVLKPSTLAKTAIRSAASQKKA.

The span at 1–18 (MESSGDKQTSSLYPTVDT) shows a compositional bias: polar residues. The transit peptide at 1-28 (MESSGDKQTSSLYPTVDTSNPEAPINPS) directs the protein to the chloroplast. The interval 1 to 37 (MESSGDKQTSSLYPTVDTSNPEAPINPSSSSSTNNLY) is disordered. Residues 19–37 (SNPEAPINPSSSSSTNNLY) show a composition bias toward low complexity. One can recognise a Senescence domain in the interval 258-426 (IATGSGHLIK…AWVAFKIRKA (169 aa)).

The protein resides in the plastid. It is found in the chloroplast. This chain is Protein EARLY-RESPONSIVE TO DEHYDRATION 7, chloroplastic, found in Arabidopsis thaliana (Mouse-ear cress).